The sequence spans 473 residues: tRNA-2-methylthio-N(6)-dimethylallyladenosine synthase (473 aa).

The 121-residue stretch at 5–125 (RKLHIKSYGC…LPQLLARADQ (121 aa)) folds into the MTTase N-terminal domain. 6 residues coordinate [4Fe-4S] cluster: Cys-14, Cys-50, Cys-88, Cys-166, Cys-170, and Cys-173. The Radical SAM core domain occupies 152-384 (RARGISAFVT…QQLIDSQQSA (233 aa)). Residues 387–459 (KAAIGQTVDV…RYSLLGELAA (73 aa)) form the TRAM domain.

It belongs to the methylthiotransferase family. MiaB subfamily. In terms of assembly, monomer. The cofactor is [4Fe-4S] cluster.

The protein resides in the cytoplasm. The catalysed reaction is N(6)-dimethylallyladenosine(37) in tRNA + (sulfur carrier)-SH + AH2 + 2 S-adenosyl-L-methionine = 2-methylsulfanyl-N(6)-dimethylallyladenosine(37) in tRNA + (sulfur carrier)-H + 5'-deoxyadenosine + L-methionine + A + S-adenosyl-L-homocysteine + 2 H(+). Functionally, catalyzes the methylthiolation of N6-(dimethylallyl)adenosine (i(6)A), leading to the formation of 2-methylthio-N6-(dimethylallyl)adenosine (ms(2)i(6)A) at position 37 in tRNAs that read codons beginning with uridine. In Rhodopseudomonas palustris (strain BisB5), this protein is tRNA-2-methylthio-N(6)-dimethylallyladenosine synthase.